A 210-amino-acid chain; its full sequence is Thymidylate kinase (210 aa).

10–17 (GPEGAGKS) provides a ligand contact to ATP.

Belongs to the thymidylate kinase family.

It carries out the reaction dTMP + ATP = dTDP + ADP. Phosphorylation of dTMP to form dTDP in both de novo and salvage pathways of dTTP synthesis. The protein is Thymidylate kinase of Pseudomonas fluorescens (strain ATCC BAA-477 / NRRL B-23932 / Pf-5).